Consider the following 342-residue polypeptide: Aromatic amino acid aminotransferase (342 aa).

N6-(pyridoxal phosphate)lysine is present on Lys214.

It belongs to the class-II pyridoxal-phosphate-dependent aminotransferase family. Homodimer. Requires pyridoxal 5'-phosphate as cofactor.

It catalyses the reaction an aromatic L-alpha-amino acid + 2-oxoglutarate = an aromatic oxo-acid + L-glutamate. Aminotransferase that catalyzes the conversion of aromatic amino acids and 2-oxoglutarate into corresponding aromatic oxo acids and L-glutamate. The sequence is that of Aromatic amino acid aminotransferase from Corynebacterium efficiens (strain DSM 44549 / YS-314 / AJ 12310 / JCM 11189 / NBRC 100395).